The chain runs to 1190 residues: DNA-directed RNA polymerase subunit beta (1190 aa).

The tract at residues 1155–1190 (ENFDDDDDHAPDAIMVDVKPAEREEAGEEKDAVTKE) is disordered. Over residues 1173–1190 (KPAEREEAGEEKDAVTKE) the composition is skewed to basic and acidic residues.

The protein belongs to the RNA polymerase beta chain family. As to quaternary structure, the RNAP catalytic core consists of 2 alpha, 1 beta, 1 beta' and 1 omega subunit. When a sigma factor is associated with the core the holoenzyme is formed, which can initiate transcription.

The enzyme catalyses RNA(n) + a ribonucleoside 5'-triphosphate = RNA(n+1) + diphosphate. DNA-dependent RNA polymerase catalyzes the transcription of DNA into RNA using the four ribonucleoside triphosphates as substrates. The protein is DNA-directed RNA polymerase subunit beta of Geobacillus kaustophilus (strain HTA426).